The chain runs to 479 residues: MASQVSLTAQGSGLSAPLNGPEHLTSTTVENDPRLLDILSRFNREKIPERAVHARGAGAYGEFEVTHDVSDICDIDMLLGIGKKTPCAVRFSTTALERGSAESVRDVKGMAIKLFTGDGEWDWVCLNIPMFFIRDPSKFPDLVHAQRPDPATNLANPAAWWEFVCNNHESLHMAVFLFTDFGTMFDYRSMSGYVSHAYKWVMPDGTWKYVHWFLASDQGPNFEQGNQTREAAPNDSESATRDLYQSLERGECPSWTVKVQVIDPEDAPRLAFNILDVSKHWNLGNYPPDIPVIPERCVGKLTLKKGPENYFEEIEKLAFSPSHLVHGVEPSEDPMLQARLFAYPDAQEHRLGPQFSDMAAKRTGHAANDAPKTKKPAVPLQKQSREHAEWVSQVTSSSWSQPNETDYKFPRELWAALPRLRGEEFQNRLVVNMAESVSQIPEDLRQKVYKTLALVAEDLASRVESLTEEMVVPEQRPRL.

Polar residues predominate over residues 1 to 13 (MASQVSLTAQGSG). The interval 1–28 (MASQVSLTAQGSGLSAPLNGPEHLTSTT) is disordered. Residue H53 is part of the active site. Residue Y343 coordinates heme. Positions 365 to 385 (HAANDAPKTKKPAVPLQKQSR) are disordered.

This sequence belongs to the catalase family. Heme serves as cofactor.

The protein operates within alkaloid biosynthesis; ergot alkaloid biosynthesis. Its function is as follows. Catalase; part of the gene cluster that mediates the biosynthesis of fungal ergot alkaloid. DmaW catalyzes the first step of ergot alkaloid biosynthesis by condensing dimethylallyl diphosphate (DMAP) and tryptophan to form 4-dimethylallyl-L-tryptophan. The second step is catalyzed by the methyltransferase easF that methylates 4-dimethylallyl-L-tryptophan in the presence of S-adenosyl-L-methionine, resulting in the formation of 4-dimethylallyl-L-abrine. The catalase easC and the FAD-dependent oxidoreductase easE then transform 4-dimethylallyl-L-abrine to chanoclavine-I which is further oxidized by easD in the presence of NAD(+), resulting in the formation of chanoclavine-I aldehyde. Agroclavine dehydrogenase easG then mediates the conversion of chanoclavine-I aldehyde to agroclavine via a non-enzymatic adduct reaction: the substrate is an iminium intermediate that is formed spontaneously from chanoclavine-I aldehyde in the presence of glutathione. Further conversion of agroclavine to paspalic acid is a two-step process involving oxidation of agroclavine to elymoclavine and of elymoclavine to paspalic acid, the second step being performed by the elymoclavine oxidase cloA. However, cloA does not encode a functional enzyme indicating that C.fusiformis terminates its ergot alkaloid pathway at elymoclavine. This Claviceps fusiformis (Ergot fungus) protein is Catalase easC.